Consider the following 311-residue polypeptide: Natural killer cell receptor 2B4 (311 aa).

An N-terminal signal peptide occupies residues 1–19; it reads MLQQTVLLSLFLLLRAHQG. The Extracellular segment spans residues 20 to 223; the sequence is QDCADSSEEV…CQSVPSKFNY (204 aa). Cys-22 and Cys-118 form a disulfide bridge. 2 consecutive Ig-like domains span residues 22-128 and 131-215; these read CADS…LIFD and ETPH…QSCQ. 6 N-linked (GlcNAc...) asparagine glycosylation sites follow: Asn-101, Asn-144, Asn-160, Asn-183, Asn-196, and Asn-205. Cys-153 and Cys-195 are disulfide-bonded. A helical membrane pass occupies residues 224 to 247; that stretch reads LPFMVSIGILVKFFHGAIDCFCVW. The Cytoplasmic portion of the chain corresponds to 248 to 311; it reads NRKRKQSQSI…RRLFQFINRS (64 aa). A disordered region spans residues 275-301; sequence RDQRGHFRASGSSSDVRGDERGQRESD. The segment covering 290 to 301 has biased composition (basic and acidic residues); that stretch reads VRGDERGQRESD.

As to quaternary structure, interacts with CD48. Interacts (via phosphorylated ITSM 1-4) with SH2D1A (via SH2 domain); SH2D1A probably mediates association with FYN. Interacts (via phosphorylated ITSM 3) with PTPN11/SHP-2, INPP5D/SHIP1, PTPN6/SHP-1 and CSK; binding of SH2D1A/SAP prevents association with PTPN11, PTPN6 and CSK; conflictingly a similar association has been described for phosphorylated ITSM 1 also including GRB2 and PLCG1. Interacts weakly (via phosphorylated ITSM 2) with PTPN11/SHP-2 and CSK. Interacts with SH2D1B. Interacts with PIK3R1; PI3K recruits SH2D1A. Interacts with MHC class I proteins; the interaction is proposed to prevent self-killing of NK cells. Post-translationally, N-linked glycosylation is essential for the binding to its ligand CD48. Also O-glycosylated, in contrast, O-linked sialylation has a negative impact on ligand binding. Phosphorylated by FYN and CSK on tyrosine residues following activation. Coligation with inhibitory receptors such as KIR2DL1 inhibits phosphorylation upon contact of NK cells with sensitive target cells.

It is found in the membrane. The protein resides in the cell membrane. It localises to the membrane raft. Its function is as follows. Heterophilic receptor of the signaling lymphocytic activation molecule (SLAM) family; its ligand is CD48. SLAM receptors triggered by homo- or heterotypic cell-cell interactions are modulating the activation and differentiation of a wide variety of immune cells and thus are involved in the regulation and interconnection of both innate and adaptive immune response. Activities are controlled by presence or absence of small cytoplasmic adapter proteins, SH2D1A/SAP and/or SH2D1B/EAT-2. Acts as activating natural killer (NK) cell receptor. Activating function implicates association with SH2D1A and FYN. Downstreaming signaling involves predominantly VAV1, and, to a lesser degree, INPP5D/SHIP1 and CBL. Signal attenuation in the absence of SH2D1A is proposed to be dependent on INPP5D and to a lesser extent PTPN6/SHP-1 and PTPN11/SHP-2. Stimulates NK cell cytotoxicity, production of IFN-gamma and granule exocytosis. Optimal expansion and activation of NK cells seems to be dependent on the engagement of CD244 with CD48 expressed on neighboring NK cells. Acts as costimulator in NK activation by enhancing signals by other NK receptors such as NCR3 and NCR1. At early stages of NK cell differentiation may function as an inhibitory receptor possibly ensuring the self-tolerance of developing NK cells. Involved in the regulation of CD8(+) T-cell proliferation; expression on activated T-cells and binding to CD48 provides costimulatory-like function for neighboring T-cells. Inhibits inflammatory responses in dendritic cells (DCs). This is Natural killer cell receptor 2B4 (Cd244) from Rattus norvegicus (Rat).